The chain runs to 275 residues: tRNA pseudouridine synthase B (275 aa).

Asp38 serves as the catalytic Nucleophile.

The protein belongs to the pseudouridine synthase TruB family. Type 1 subfamily.

It catalyses the reaction uridine(55) in tRNA = pseudouridine(55) in tRNA. Functionally, responsible for synthesis of pseudouridine from uracil-55 in the psi GC loop of transfer RNAs. The protein is tRNA pseudouridine synthase B of Nitratiruptor sp. (strain SB155-2).